Consider the following 1077-residue polypeptide: Carbamoyl phosphate synthase large chain (1077 aa).

Positions 1–403 (MPKRTDIQSI…SLHKALRGLE (403 aa)) are carboxyphosphate synthetic domain. Residues Arg-129, Arg-169, Gly-175, Gly-176, Glu-208, Leu-210, Glu-215, Gly-241, Ile-242, His-243, Gln-285, and Glu-299 each contribute to the ATP site. The region spanning 133 to 328 (DKAMKSIGLE…IAKIAAKLAV (196 aa)) is the ATP-grasp 1 domain. Residues Gln-285, Glu-299, and Asn-301 each coordinate Mg(2+). The Mn(2+) site is built by Gln-285, Glu-299, and Asn-301. The oligomerization domain stretch occupies residues 404-553 (VGATGFDEMV…YSSYDDECEA (150 aa)). The segment at 554–935 (NPTDKEKIMV…AYAKAELGCG (382 aa)) is carbamoyl phosphate synthetic domain. Residues 678–869 (QQAVDRLGLL…LAKIAARVMA (192 aa)) form the ATP-grasp 2 domain. ATP-binding residues include Arg-714, Arg-753, Leu-755, Glu-760, Gly-785, Val-786, His-787, Ser-788, Gln-828, and Glu-840. 3 residues coordinate Mg(2+): Gln-828, Glu-840, and Asn-842. Mn(2+) contacts are provided by Gln-828, Glu-840, and Asn-842. Positions 936-1077 (NVYPEGGRAL…HAQVQASLKA (142 aa)) constitute an MGS-like domain. An allosteric domain region spans residues 936-1077 (NVYPEGGRAL…HAQVQASLKA (142 aa)).

The protein belongs to the CarB family. As to quaternary structure, composed of two chains; the small (or glutamine) chain promotes the hydrolysis of glutamine to ammonia, which is used by the large (or ammonia) chain to synthesize carbamoyl phosphate. Tetramer of heterodimers (alpha,beta)4. Mg(2+) is required as a cofactor. Requires Mn(2+) as cofactor.

The enzyme catalyses hydrogencarbonate + L-glutamine + 2 ATP + H2O = carbamoyl phosphate + L-glutamate + 2 ADP + phosphate + 2 H(+). It carries out the reaction hydrogencarbonate + NH4(+) + 2 ATP = carbamoyl phosphate + 2 ADP + phosphate + 2 H(+). It functions in the pathway amino-acid biosynthesis; L-arginine biosynthesis; carbamoyl phosphate from bicarbonate: step 1/1. It participates in pyrimidine metabolism; UMP biosynthesis via de novo pathway; (S)-dihydroorotate from bicarbonate: step 1/3. Functionally, large subunit of the glutamine-dependent carbamoyl phosphate synthetase (CPSase). CPSase catalyzes the formation of carbamoyl phosphate from the ammonia moiety of glutamine, carbonate, and phosphate donated by ATP, constituting the first step of 2 biosynthetic pathways, one leading to arginine and/or urea and the other to pyrimidine nucleotides. The large subunit (synthetase) binds the substrates ammonia (free or transferred from glutamine from the small subunit), hydrogencarbonate and ATP and carries out an ATP-coupled ligase reaction, activating hydrogencarbonate by forming carboxy phosphate which reacts with ammonia to form carbamoyl phosphate. This chain is Carbamoyl phosphate synthase large chain, found in Vibrio vulnificus (strain CMCP6).